The chain runs to 278 residues: DNA adenine methylase (278 aa).

The S-adenosyl-L-methionine site is built by Trp-10, Lys-14, Asp-54, and Asp-181.

The protein belongs to the N(4)/N(6)-methyltransferase family.

The enzyme catalyses a 2'-deoxyadenosine in DNA + S-adenosyl-L-methionine = an N(6)-methyl-2'-deoxyadenosine in DNA + S-adenosyl-L-homocysteine + H(+). In terms of biological role, an alpha subtype methylase, recognizes the double-stranded sequence 5'-GATC-3' and methylates A-2. May be involved in methyl-directed DNA mismatch repair, initiation of chromosome replication and gene expression. The sequence is that of DNA adenine methylase (dam) from Salmonella typhi.